Here is a 257-residue protein sequence, read N- to C-terminus: Dihydroorotate dehydrogenase B (NAD(+)), electron transfer subunit (257 aa).

An FAD-binding FR-type domain is found at 2-102 (IGRERMTVAS…LGPLGNGFPL (101 aa)). Residues 53-56 (RPLS), 70-72 (IYR), and 77-78 (GT) contribute to the FAD site. [2Fe-2S] cluster-binding residues include Cys-221, Cys-226, Cys-229, and Cys-244.

The protein belongs to the PyrK family. As to quaternary structure, heterotetramer of 2 PyrK and 2 PyrD type B subunits. It depends on [2Fe-2S] cluster as a cofactor. FAD serves as cofactor.

Its pathway is pyrimidine metabolism; UMP biosynthesis via de novo pathway; orotate from (S)-dihydroorotate (NAD(+) route): step 1/1. Its function is as follows. Responsible for channeling the electrons from the oxidation of dihydroorotate from the FMN redox center in the PyrD type B subunit to the ultimate electron acceptor NAD(+). This is Dihydroorotate dehydrogenase B (NAD(+)), electron transfer subunit from Geobacillus kaustophilus (strain HTA426).